Reading from the N-terminus, the 140-residue chain is Small ribosomal subunit protein uS9A (140 aa).

The protein belongs to the universal ribosomal protein uS9 family. As to quaternary structure, component of the small ribosomal subunit (SSU). Mature yeast ribosomes consist of a small (40S) and a large (60S) subunit. The 40S small subunit contains 1 molecule of ribosomal RNA (18S rRNA) and at least 33 different proteins. The large 60S subunit contains 3 rRNA molecules (25S, 5.8S and 5S rRNA) and at least 46 different proteins.

It localises to the cytoplasm. Component of the ribosome, a large ribonucleoprotein complex responsible for the synthesis of proteins in the cell. The small ribosomal subunit (SSU) binds messenger RNAs (mRNAs) and translates the encoded message by selecting cognate aminoacyl-transfer RNA (tRNA) molecules. The large subunit (LSU) contains the ribosomal catalytic site termed the peptidyl transferase center (PTC), which catalyzes the formation of peptide bonds, thereby polymerizing the amino acids delivered by tRNAs into a polypeptide chain. The nascent polypeptides leave the ribosome through a tunnel in the LSU and interact with protein factors that function in enzymatic processing, targeting, and the membrane insertion of nascent chains at the exit of the ribosomal tunnel. This Schizosaccharomyces pombe (strain 972 / ATCC 24843) (Fission yeast) protein is Small ribosomal subunit protein uS9A (rps1601).